Reading from the N-terminus, the 482-residue chain is Guanine nucleotide exchange factor SRM1 (482 aa).

Over residues 1–11 the composition is skewed to polar residues; the sequence is MVKRTVATNGD. A disordered region spans residues 1–22; the sequence is MVKRTVATNGDASGAHRAKKMS. Positions 15 to 26 match the Nuclear localization signal motif; the sequence is AHRAKKMSKTHA. RCC1 repeat units follow at residues 45–101, 103–152, 183–238, 239–291, 292–347, 349–411, and 412–466; these read PLDI…ALDE, SNVW…TPAK, NGEV…FLDE, EGMV…ALTK, DNKL…ILSQ, GDLY…AVAQ, and NGIA…SGGV. The interval 128–158 is disordered; it reads KDMDADDSSDDEDGDLNELESTPAKIPRESF. A compositionally biased stretch (acidic residues) spans 131 to 145; that stretch reads DADDSSDDEDGDLNE. A phosphoserine mark is found at S135 and S136.

In terms of assembly, component of a multicomponent complex composed of six to seven proteins, which has a collective molecular mass greater than 150 kDa. Interacts with GSP1 and YRB2. In terms of processing, phosphorylated; possibly by KSP1.

It is found in the nucleus. Its function is as follows. Guanine nucleotide exchange factor that promotes the exchange of GSP1/GSP2-bound GDP by GTP and controls RNA metabolism and transport. Involved in yeast pheromone response pathway and in mRNA metabolism. Involved in nuclear pore complex (NPC) assembly and required for mRNA and ribosome nuclear export. Binds chromatin and is involved NPC-mediated transcriptional control. The sequence is that of Guanine nucleotide exchange factor SRM1 (SRM1) from Saccharomyces cerevisiae (strain ATCC 204508 / S288c) (Baker's yeast).